The chain runs to 536 residues: Transcription factor cheR (536 aa).

The segment at residues 19–57 (CDRCHRHKLRCERSSVIVNGGVAVPLGPCKRCLKACIPC) is a DNA-binding region (zn(2)-C6 fungal-type). Disordered regions lie at residues 70 to 122 (AKTG…LSGT) and 220 to 243 (ALTD…PREE). Low complexity predominate over residues 88–108 (AASPAKRAPSPARRPTASTPR).

Its subcellular location is the nucleus. Transcription factor; part of the gene cluster that mediates the biosynthesis of chaetoglobosin A which has a unique inhibitory activity against actin polymerization in mammalian cells. Chaetoglobosin A and its intermediates are involved in the morphological differentiation of C.globosum. Binds directly to asymmetric direct repeats present in the promoters of the chaetoglobosin A cluster genes. The polypeptide is Transcription factor cheR (Chaetomium globosum (strain ATCC 6205 / CBS 148.51 / DSM 1962 / NBRC 6347 / NRRL 1970) (Soil fungus)).